Here is a 488-residue protein sequence, read N- to C-terminus: MADVRKLKNYIDGEWVESKTDKYEDVINPATGEVLCQVPISTRAELDQAAVIAEQAFEKWSQVAVPRRARVLFGFQQLLIQHKEELARLITLENGKNLSEARGEVQRGIENVEFAAGAPTLMMGDSLASIATDVEAANYRYPVGVVGGIAPFNFPMMVPCWMFPMAIALGNSFILKPSERTPLLMEKLVELFSEAGLPKGVFNVVYGAHDVVNGILENEIIKAVSFVGSKPVGEYVYKTGSANLKRVQALTGAKNHTIVLNDADLEDTVTNVISAAFGSAGERCMACAVVTVEEGIADEFLEALRTAAQNVKIGNGLDDGVFLGPVIREENQKRTIAYIEKGIEEGAKLTVDGRETGLSEGHFVGPTILEDVTTDMTIWKDEIFAPVLSVIRVKNLQEAVRVANQSEFANGACIFTNNAKAIRYFREKIDAGMLGVNLGVPAPMAFFPFSGWKSSFYGTLHANGKDSVDFYTHKKVVTARYSLKGYEE.

A150, F152, K176, E179, R180, S229, and T251 together coordinate NAD(+). The active-site Nucleophile is C284. Position 382 (E382) interacts with NAD(+).

Belongs to the aldehyde dehydrogenase family. IolA subfamily. As to quaternary structure, homotetramer.

It carries out the reaction 3-oxopropanoate + NAD(+) + CoA + H2O = hydrogencarbonate + acetyl-CoA + NADH + H(+). It catalyses the reaction 2-methyl-3-oxopropanoate + NAD(+) + CoA + H2O = propanoyl-CoA + hydrogencarbonate + NADH + H(+). The protein operates within polyol metabolism; myo-inositol degradation into acetyl-CoA; acetyl-CoA from myo-inositol: step 7/7. In terms of biological role, catalyzes the oxidation of malonate semialdehyde (MSA) and methylmalonate semialdehyde (MMSA) into acetyl-CoA and propanoyl-CoA, respectively. Is involved in a myo-inositol catabolic pathway. Bicarbonate, and not CO2, is the end-product of the enzymatic reaction. In Listeria monocytogenes serovar 1/2a (strain ATCC BAA-679 / EGD-e), this protein is Malonate-semialdehyde dehydrogenase.